Consider the following 60-residue polypeptide: Large ribosomal subunit protein uL30 (60 aa).

Belongs to the universal ribosomal protein uL30 family. As to quaternary structure, part of the 50S ribosomal subunit.

In Oceanobacillus iheyensis (strain DSM 14371 / CIP 107618 / JCM 11309 / KCTC 3954 / HTE831), this protein is Large ribosomal subunit protein uL30.